The primary structure comprises 615 residues: Probable transporter mch1 (615 aa).

The segment at 1-35 (MTGSIGQAPAIDKRDFDINRRSSTPHETAAQEDEA) is disordered. The span at 11–20 (IDKRDFDINR) shows a compositional bias: basic and acidic residues. The chain crosses the membrane as a helical span at residues 84-104 (FVWGVITCLGAGSITAFSLYG). Asn112 carries N-linked (GlcNAc...) asparagine glycosylation. Transmembrane regions (helical) follow at residues 120–140 (EVSI…GYLC), 147–167 (PLTL…AFVY), 182–202 (FWVM…MYLA), 218–238 (GIIL…QSQV), and 261–281 (FLFL…ALRI). Residue Asn329 is glycosylated (N-linked (GlcNAc...) asparagine). A run of 6 helical transmembrane segments spans residues 371–391 (IFLA…VTGP), 428–448 (IIAL…DLFA), 477–497 (LAFL…LASP), 512–532 (LVGL…SVVW), 538–558 (GTNW…WGVI), and 583–603 (FGFW…AWLV).

It belongs to the major facilitator superfamily.

The protein resides in the vacuole membrane. Functionally, probable transporter. This chain is Probable transporter mch1 (mch1), found in Emericella nidulans (strain FGSC A4 / ATCC 38163 / CBS 112.46 / NRRL 194 / M139) (Aspergillus nidulans).